Here is a 1353-residue protein sequence, read N- to C-terminus: Protein timeless homolog (1353 aa).

Disordered stretches follow at residues 798 to 825, 1150 to 1291, and 1306 to 1335; these read VAED…EEEV, KPTR…LEED, and GGSI…DPFT. Acidic residues predominate over residues 802-825; that stretch reads RAEDPDEEDPAEPYDSEQEEEEEV. Basic and acidic residues-rich tracts occupy residues 1150-1160 and 1168-1182; these read KPTRQVERHLE and ERSK…KFDD. 2 stretches are compositionally biased toward acidic residues: residues 1183 to 1206 and 1217 to 1226; these read FLND…EEEE and DSEDEEEHIE. Residues 1227 to 1239 show a composition bias toward basic and acidic residues; it reads QEEAQKKLEKVAE. 3 stretches are compositionally biased toward acidic residues: residues 1261–1273, 1282–1291, and 1323–1332; these read DSSD…DSAE, AEDDSDLEED, and EEREDDDDED.

The protein belongs to the timeless family. As to quaternary structure, associates with the cohesin complex. Interacts with smc-1, smc-3, scc-1 and scc-3.

Its subcellular location is the nucleus. Plays an important role in chromosome cohesion during both mitosis and meiosis. In prophase of meiosis, it is involved in the formation of the synaptonemal complex (SC) and specifically, in the diplotene and diakinesis phases of prophase, it stabilizes the association of homologous chromosomes during synapsis and sister chromatid cohesion. It regulates cohesin subunits to promote meiotic chromosome cohesion and localizes non-SMC (structural maintenance of chromosome) cohesin subunits to chromatin prior to or during pre-meiotic S phase. Implicated in influencing either the stability or loading of meiotic-specific cohesin subunit, rec8. Controls cell cycle exit and cell fusion to prevent the premature differentiation into adult cells. Specifically, regulates hypodermal seam cell identity. The polypeptide is Protein timeless homolog (Caenorhabditis elegans).